A 142-amino-acid polypeptide reads, in one-letter code: Ribosome-binding factor A (142 aa).

Residues 118-142 (DKNGDAEVDDTQVDDEPSVDSEKGE) form a disordered region. Positions 123–136 (AEVDDTQVDDEPSV) are enriched in acidic residues.

This sequence belongs to the RbfA family. In terms of assembly, monomer. Binds 30S ribosomal subunits, but not 50S ribosomal subunits or 70S ribosomes.

It localises to the cytoplasm. One of several proteins that assist in the late maturation steps of the functional core of the 30S ribosomal subunit. Associates with free 30S ribosomal subunits (but not with 30S subunits that are part of 70S ribosomes or polysomes). Required for efficient processing of 16S rRNA. May interact with the 5'-terminal helix region of 16S rRNA. This chain is Ribosome-binding factor A, found in Colwellia psychrerythraea (strain 34H / ATCC BAA-681) (Vibrio psychroerythus).